The sequence spans 166 residues: Putative 4-hydroxy-4-methyl-2-oxoglutarate aldolase (166 aa).

Residues Gly-74–Ile-77 and Arg-96 each bind substrate. Residue Asp-97 participates in a divalent metal cation binding.

The protein belongs to the class II aldolase/RraA-like family. As to quaternary structure, homotrimer. A divalent metal cation serves as cofactor.

The enzyme catalyses 4-hydroxy-4-methyl-2-oxoglutarate = 2 pyruvate. It carries out the reaction oxaloacetate + H(+) = pyruvate + CO2. Its function is as follows. Catalyzes the aldol cleavage of 4-hydroxy-4-methyl-2-oxoglutarate (HMG) into 2 molecules of pyruvate. Also contains a secondary oxaloacetate (OAA) decarboxylase activity due to the common pyruvate enolate transition state formed following C-C bond cleavage in the retro-aldol and decarboxylation reactions. The protein is Putative 4-hydroxy-4-methyl-2-oxoglutarate aldolase of Xanthomonas axonopodis pv. citri (strain 306).